Here is a 548-residue protein sequence, read N- to C-terminus: Phenylalanine--tRNA ligase beta subunit (548 aa).

Positions 275 to 350 (LKEDVLETTS…IAYGYNKFSG (76 aa)) constitute a B5 domain. 4 residues coordinate Mg(2+): Asp328, Asp334, Glu337, and Glu338.

This sequence belongs to the phenylalanyl-tRNA synthetase beta subunit family. Type 2 subfamily. As to quaternary structure, tetramer of two alpha and two beta subunits. It depends on Mg(2+) as a cofactor.

The protein resides in the cytoplasm. It catalyses the reaction tRNA(Phe) + L-phenylalanine + ATP = L-phenylalanyl-tRNA(Phe) + AMP + diphosphate + H(+). This Methanocaldococcus jannaschii (strain ATCC 43067 / DSM 2661 / JAL-1 / JCM 10045 / NBRC 100440) (Methanococcus jannaschii) protein is Phenylalanine--tRNA ligase beta subunit.